A 361-amino-acid polypeptide reads, in one-letter code: Probable purine permease 5 (361 aa).

9 consecutive transmembrane segments (helical) span residues 37–57, 70–90, 105–125, 134–154, 158–178, 193–213, 235–255, 285–305, and 315–335; these read WILL…SSLL, WIIS…LLPT, LVLS…MYAY, TSSL…YLIV, LNAS…IIAL, YFAG…IFAL, VMVS…SNDF, LGVL…AGVL, and VAAV…SLVL. An EamA domain is found at 75–178; the sequence is VAVAGWPITC…ITGAMAIIAL (104 aa).

This sequence belongs to the purine permeases (TC 2.A.7.14) family.

It is found in the membrane. This is Probable purine permease 5 (PUP5) from Arabidopsis thaliana (Mouse-ear cress).